A 308-amino-acid polypeptide reads, in one-letter code: Olfactory receptor 4E2 (308 aa).

Topologically, residues 1 to 24 (MGALNQTRVTEFIFLGLTDNWVLE) are extracellular. N5 is a glycosylation site (N-linked (GlcNAc...) asparagine). The helical transmembrane segment at 25 to 45 (ILFFVPFTVTYMLTLLGNFLI) threads the bilayer. Topologically, residues 46-57 (VVTIVFTPRLHN) are cytoplasmic. The chain crosses the membrane as a helical span at residues 58–78 (PMYFFLSNLSFIDICHSSVTV). At 79–97 (PKMLEGLLLERKTISFDNC) the chain is on the extracellular side. An intrachain disulfide couples C97 to C179. A helical membrane pass occupies residues 98–118 (IAQLFFLHLFACSEIFLLTIM). Positions 105 and 109 each coordinate Cu cation. At 119 to 143 (AYDRYVAICIPLHYSNVMNMKVCVQ) the chain is on the cytoplasmic side. Residues 144 to 164 (LVFALWLGGTIHSLVQTFLTI) traverse the membrane as a helical segment. The Extracellular segment spans residues 165–204 (RLPYCGPNIIDSYFCDVPPVIKLACTDTYLTGILIVSNSG). Residues 205 to 225 (TISLVCFLALVTSYTVILFSL) form a helical membrane-spanning segment. Residues 226-236 (RKQSAEGRRKA) are Cytoplasmic-facing. A helical transmembrane segment spans residues 237-257 (LSTCSAHFMVVALFFGPCIFL). The Extracellular portion of the chain corresponds to 258–268 (YTRPDSSFSID). Residue R260 coordinates Cu cation. The helical transmembrane segment at 269 to 289 (KVVSVFYTVVTPLLNPLIYTL) threads the bilayer. Over 290–308 (RNEEVKTAMKHLRQRRICS) the chain is Cytoplasmic.

The protein belongs to the G-protein coupled receptor 1 family. As to expression, expressed in olfactory epithelium, specifically in the olfactory sensory neurons of the septal organ.

It is found in the cell membrane. With respect to regulation, copper binding enhances receptor activity in response to odorant binding. Olfactory receptor that is activated by the binding of organosulfur odorants with thioether groups such as (methylthio)methanethiol (MTMT) and bis(methylthiomethyl) disulfide. Also binds odorants cis-cyclooctene and tert-butyl mercaptan. The activity of this receptor is mediated by G proteins which activate adenylyl cyclase (Potential). In Mus musculus (Mouse), this protein is Olfactory receptor 4E2.